The following is a 171-amino-acid chain: Secreted thaumatin-like protein calA (171 aa).

Residues 1–18 form the signal peptide; sequence MLFNKIISLAATLATASA. 2 N-linked (GlcNAc...) asparagine glycosylation sites follow: Asn37 and Asn141. Cystine bridges form between Cys130/Cys157 and Cys135/Cys142.

Belongs to the thaumatin family.

Its subcellular location is the secreted. It localises to the extracellular space. The protein resides in the extracellular matrix. It is found in the cell wall. Its function is as follows. Secreted thaumatin-like protein that, with cetA, plays an essential role in early conidial germination with a possible role in cell wall remodeling. The chain is Secreted thaumatin-like protein calA from Emericella nidulans (strain FGSC A4 / ATCC 38163 / CBS 112.46 / NRRL 194 / M139) (Aspergillus nidulans).